A 567-amino-acid chain; its full sequence is MERTEESAPGPGGADAASERRGLRCLLLPGFLEELRALLVLAGPAFLAQLMMFLISFISSVFCGHLGKLELDAVTLAIAVINVTGISVGHGLSSACDTLISQTYGSQNLKHVGVILQRGTLILLLCCFPCWALFINTEQILLLFRQDPDVSRLTQTYVMIFIPALPAAFLYTLQVKYLLNQGIVLPQIMTGIAANLVNALANYVFLYHLHLGVMGSALANTISQFALAIFLFLYILWRRLHQATWGGWSWECLQDWASFLRLAIPSMLMLCIEWWAYEVGSFLSGILGMVELGAQSITYELAIIVYMIPSGFSVAANVRVGNALGAGNIDQAKKSSAISLIVTELFAVTFCVLLLGCKDLVGYIFTTDRDIVALVAQVIPIYAVSHLFEGLACTCGGILRGTGNQKVGAIVNAIGYYVIGLPIGIALMFAAKLGVIGLWSGIIICTTCQTTCFLAFIARLNWKRACQQAQVHANLKVNVALNSAVSHEPAHPVCPESHGEIMMTDLEKKDETQLDQPMNQQQALPIRPKDSNKLSGKQLALRRGLLLLGVVLVLVGGILVRVYIRIE.

M1 bears the N-acetylmethionine mark. Over 1 to 37 the chain is Cytoplasmic; it reads MERTEESAPGPGGADAASERRGLRCLLLPGFLEELRA. The residue at position 18 (S18) is a Phosphoserine. Residues 38 to 58 form a helical membrane-spanning segment; it reads LLVLAGPAFLAQLMMFLISFI. Residues 59 to 72 lie on the Extracellular side of the membrane; that stretch reads SSVFCGHLGKLELD. A helical transmembrane segment spans residues 73-93; that stretch reads AVTLAIAVINVTGISVGHGLS. Residues 94-120 lie on the Cytoplasmic side of the membrane; that stretch reads SACDTLISQTYGSQNLKHVGVILQRGT. A helical transmembrane segment spans residues 121–141; the sequence is LILLLCCFPCWALFINTEQIL. Residues 142–152 are Extracellular-facing; sequence LLFRQDPDVSR. The chain crosses the membrane as a helical span at residues 153-173; that stretch reads LTQTYVMIFIPALPAAFLYTL. The Cytoplasmic segment spans residues 174–187; sequence QVKYLLNQGIVLPQ. The chain crosses the membrane as a helical span at residues 188 to 208; the sequence is IMTGIAANLVNALANYVFLYH. Over 209 to 216 the chain is Extracellular; it reads LHLGVMGS. A helical transmembrane segment spans residues 217–237; that stretch reads ALANTISQFALAIFLFLYILW. The Cytoplasmic segment spans residues 238–257; that stretch reads RRLHQATWGGWSWECLQDWA. A helical transmembrane segment spans residues 258-277; it reads SFLRLAIPSMLMLCIEWWAY. The Extracellular segment spans residues 278–295; the sequence is EVGSFLSGILGMVELGAQ. A helical transmembrane segment spans residues 296 to 316; sequence SITYELAIIVYMIPSGFSVAA. At 317–336 the chain is on the cytoplasmic side; it reads NVRVGNALGAGNIDQAKKSS. Residues 337-357 traverse the membrane as a helical segment; it reads AISLIVTELFAVTFCVLLLGC. At 358–370 the chain is on the extracellular side; that stretch reads KDLVGYIFTTDRD. A helical transmembrane segment spans residues 371-391; that stretch reads IVALVAQVIPIYAVSHLFEGL. The Cytoplasmic portion of the chain corresponds to 392-408; it reads ACTCGGILRGTGNQKVG. Residues 409–429 traverse the membrane as a helical segment; that stretch reads AIVNAIGYYVIGLPIGIALMF. The Extracellular segment spans residues 430 to 437; sequence AAKLGVIG. The helical transmembrane segment at 438 to 458 threads the bilayer; that stretch reads LWSGIIICTTCQTTCFLAFIA. Residues 459–543 are Cytoplasmic-facing; the sequence is RLNWKRACQQ…LSGKQLALRR (85 aa). A helical membrane pass occupies residues 544–564; that stretch reads GLLLLGVVLVLVGGILVRVYI. The Extracellular segment spans residues 565 to 567; it reads RIE.

The protein belongs to the multi antimicrobial extrusion (MATE) (TC 2.A.66.1) family. In terms of tissue distribution, predominantly expressed in kidney and liver. Also expressed in various cells, including brain glia-like cells and capillaries, pancreatic duct cells, urinary bladder epithelium, adrenal gland cortex, heart, stomach, small intestine, thyroid gland, testes, alpha cells of the islets of Langerhans, Leydig cells, and vitamin A-storing Ito cells. Expressed in heart, stomach, small intestine, bladder, thyroid gland, adrenal gland and testes (at protein level).

The protein resides in the cell membrane. Its subcellular location is the apical cell membrane. It catalyses the reaction thiamine(out) + H(+)(in) = thiamine(in) + H(+)(out). The enzyme catalyses estrone 3-sulfate(in) + H(+)(out) = estrone 3-sulfate(out) + H(+)(in). The catalysed reaction is creatinine(in) + H(+)(out) = creatinine(out) + H(+)(in). It carries out the reaction agmatine(in) + H(+)(out) = agmatine(out) + H(+)(in). Functionally, multidrug efflux pump that functions as a H(+)/organic cation antiporter. Plays a physiological role in the excretion of cationic compounds including endogenous metabolites, drugs, toxins through the kidney and liver, into urine and bile respectively. Mediates the efflux of endogenous compounds such as creatinine, vitamin B1/thiamine, agmatine and estrone-3-sulfate. May also contribute to regulate the transport of cationic compounds in testis across the blood-testis-barrier. The protein is Multidrug and toxin extrusion protein 1 (Slc47a1) of Mus musculus (Mouse).